The primary structure comprises 150 residues: Lipoprotein signal peptidase (150 aa).

3 consecutive transmembrane segments (helical) span residues 5–25, 59–79, and 82–102; these read LSLV…NWVV, QQWF…WFLW, and MGQN…LGNF. Catalysis depends on residues aspartate 113 and aspartate 129. The helical transmembrane segment at 124–144 threads the bilayer; it reads IFNIADILLSVGFVVLFIAIL.

Belongs to the peptidase A8 family.

Its subcellular location is the cell membrane. It carries out the reaction Release of signal peptides from bacterial membrane prolipoproteins. Hydrolyzes -Xaa-Yaa-Zaa-|-(S,diacylglyceryl)Cys-, in which Xaa is hydrophobic (preferably Leu), and Yaa (Ala or Ser) and Zaa (Gly or Ala) have small, neutral side chains.. It functions in the pathway protein modification; lipoprotein biosynthesis (signal peptide cleavage). Functionally, this protein specifically catalyzes the removal of signal peptides from prolipoproteins. The protein is Lipoprotein signal peptidase of Lactococcus lactis subsp. cremoris (strain SK11).